The chain runs to 875 residues: Alanine--tRNA ligase (875 aa).

Residues His564, His568, Cys666, and His670 each contribute to the Zn(2+) site.

Belongs to the class-II aminoacyl-tRNA synthetase family. Homotetramer. The cofactor is Zn(2+).

It localises to the cytoplasm. It carries out the reaction tRNA(Ala) + L-alanine + ATP = L-alanyl-tRNA(Ala) + AMP + diphosphate. Functionally, catalyzes the attachment of alanine to tRNA(Ala) in a two-step reaction: alanine is first activated by ATP to form Ala-AMP and then transferred to the acceptor end of tRNA(Ala). Also edits incorrectly charged Ser-tRNA(Ala) and Gly-tRNA(Ala) via its editing domain. The chain is Alanine--tRNA ligase from Pectobacterium atrosepticum (strain SCRI 1043 / ATCC BAA-672) (Erwinia carotovora subsp. atroseptica).